Here is a 188-residue protein sequence, read N- to C-terminus: Elongation factor P (188 aa).

Belongs to the elongation factor P family.

It is found in the cytoplasm. It functions in the pathway protein biosynthesis; polypeptide chain elongation. Involved in peptide bond synthesis. Stimulates efficient translation and peptide-bond synthesis on native or reconstituted 70S ribosomes in vitro. Probably functions indirectly by altering the affinity of the ribosome for aminoacyl-tRNA, thus increasing their reactivity as acceptors for peptidyl transferase. The sequence is that of Elongation factor P from Ureaplasma urealyticum serovar 10 (strain ATCC 33699 / Western).